The sequence spans 324 residues: MKLQQLRYIVEVVNHNLNVSSTAEGLYTSQPGISKQVRMLEDELGIQIFSRSGKHLTQVTPAGQEIIRIAREVLSKVDAIKSVAGEHTWPDKGSLYIATTHTQARYALPNVIKGFIERYPRVSLHMHQGSPTQIADAVSKGNADFAIATEALHLYEDLVMLPCYHWNRAIVVTPDHPLAGKKAITIEELAQYPLVTYTFGFTGRSELDTAFNRAGLTPRIVFTATDADVIKTYVRLGLGVGVIASMAVDPVADPDLVRVDAHDIFSHSTTKIGFRRSTFLRSYMYDFIQRFAPHLTRDVVDAAVALRSNEEIEVMFKDIKLPEK.

An HTH lysR-type domain is found at 1-59 (MKLQQLRYIVEVVNHNLNVSSTAEGLYTSQPGISKQVRMLEDELGIQIFSRSGKHLTQV). The H-T-H motif DNA-binding region spans 19-38 (VSSTAEGLYTSQPGISKQVR).

Belongs to the LysR transcriptional regulatory family. As to quaternary structure, homotetramer.

Its subcellular location is the cytoplasm. Functionally, this protein is a positive regulator of gene expression for the cysteine regulon. The inducer for CysB is N-acetylserine. In Escherichia coli O157:H7, this protein is HTH-type transcriptional regulator CysB (cysB).